The sequence spans 323 residues: Aquaporin-4 (323 aa).

Over 1–36 the chain is Cytoplasmic; that stretch reads MSDRPAARRWGKCGPLCTRESIMVAFKGVWTQTFWK. Residues C13 and C17 are each lipidated (S-palmitoyl cysteine). The helical transmembrane segment at 37 to 57 threads the bilayer; it reads AVTAEFLAMLIFVLLSLGSTI. The Extracellular portion of the chain corresponds to 58-69; it reads NWGGAEKPLPVD. A helical transmembrane segment spans residues 70 to 89; sequence MVLISLCFGLSIATMVQCFG. The Cytoplasmic segment spans residues 90–93; the sequence is HISG. The discontinuously helical intramembrane region spans 94–101; the sequence is GHINPAVT. An NPA 1 motif is present at residues 97–99; sequence NPA. Over 102–115 the chain is Cytoplasmic; it reads VAMVCTRRISIAKS. S111 is subject to Phosphoserine; by PKG. Residues 116-136 traverse the membrane as a helical segment; that stretch reads VFYIAAQCLGAIIGAGILYLV. The Extracellular portion of the chain corresponds to 137–155; it reads TPPSVVGGLGVTTVHGNLS. Residue N153 is glycosylated (N-linked (GlcNAc...) asparagine). Residues 156-176 form a helical membrane-spanning segment; sequence AGHGLLVELIITFQLVFTIFA. Residues 177–184 are Cytoplasmic-facing; the sequence is SCDSKRTD. A Phosphoserine; by PKC modification is found at S180. Residues 185 to 205 traverse the membrane as a helical segment; sequence VTGSIALAIGISVAIGHLFAI. An N-linked (GlcNAc...) asparagine glycan is attached at N206. Residues 206-208 are Extracellular-facing; it reads NYT. An intramembrane region (discontinuously helical) is located at residues 209–222; the sequence is GASMNPARSFGPAV. The NPA 2 motif lies at 213-215; it reads NPA. Residues 223-231 lie on the Extracellular side of the membrane; it reads IMGNWENHW. Residues 232–252 traverse the membrane as a helical segment; the sequence is IYWVGPIIGAVLAGGLYEYVF. At 253-323 the chain is on the cytoplasmic side; the sequence is CPDVELKRRF…DPSGEVLSSV (71 aa). Phosphoserine is present on residues S276 and S285. T289 carries the phosphothreonine modification. Phosphoserine is present on S321.

The protein belongs to the MIP/aquaporin (TC 1.A.8) family. In terms of assembly, homotetramer. The tetramers can form oligomeric arrays in membranes. The size of the oligomers differs between tissues and is smaller in skeletal muscle than in brain. Interaction between AQP4 oligomeric arrays in close-by cells can contribute to cell-cell adhesion. Part of a complex containing MLC1, TRPV4, HEPACAM and ATP1B1. Post-translationally, phosphorylation by PKC at Ser-180 reduces conductance by 50%. Phosphorylation by PKG at Ser-111 in response to glutamate increases conductance by 40%. Isoform 2: Palmitoylated on its N-terminal region. Isoform 1: Not palmitoylated. Detected in brain and lung.

It is found in the cell membrane. The protein resides in the basolateral cell membrane. It localises to the endosome membrane. The protein localises to the sarcolemma. Its subcellular location is the cell projection. The catalysed reaction is H2O(in) = H2O(out). Functionally, forms a water-specific channel. Plays an important role in brain water homeostasis and in glymphatic solute transport. Required for a normal rate of water exchange across the blood brain interface. Required for normal levels of cerebrospinal fluid influx into the brain cortex and parenchyma along paravascular spaces that surround penetrating arteries, and for normal drainage of interstitial fluid along paravenous drainage pathways. Thereby, it is required for normal clearance of solutes from the brain interstitial fluid, including soluble beta-amyloid peptides derived from APP. Plays a redundant role in urinary water homeostasis and urinary concentrating ability. The chain is Aquaporin-4 (AQP4) from Bos taurus (Bovine).